The sequence spans 41 residues: Peroxidase 3 (41 aa).

Belongs to the peroxidase family. Classical plant (class III) peroxidase subfamily. It depends on heme b as a cofactor. Ca(2+) serves as cofactor.

The protein localises to the secreted. It catalyses the reaction 2 a phenolic donor + H2O2 = 2 a phenolic radical donor + 2 H2O. In terms of biological role, removal of H(2)O(2), oxidation of toxic reductants, biosynthesis and degradation of lignin, suberization, auxin catabolism, response to environmental stresses such as wounding, pathogen attack and oxidative stress. These functions might be dependent on each isozyme/isoform in each plant tissue. The chain is Peroxidase 3 from Vitis vinifera (Grape).